A 430-amino-acid chain; its full sequence is Trigger factor (430 aa).

Positions 163–248 (GDIAVIDFEG…LNSLKRKNMP (86 aa)) constitute a PPIase FKBP-type domain.

This sequence belongs to the FKBP-type PPIase family. Tig subfamily.

It localises to the cytoplasm. It catalyses the reaction [protein]-peptidylproline (omega=180) = [protein]-peptidylproline (omega=0). Functionally, involved in protein export. Acts as a chaperone by maintaining the newly synthesized protein in an open conformation. Functions as a peptidyl-prolyl cis-trans isomerase. This chain is Trigger factor, found in Brevibacillus brevis (strain 47 / JCM 6285 / NBRC 100599).